Reading from the N-terminus, the 471-residue chain is Ribulose bisphosphate carboxylase large chain (471 aa).

Substrate-binding residues include asparagine 119 and threonine 169. Lysine 171 serves as the catalytic Proton acceptor. Substrate is bound at residue lysine 173. Lysine 197, aspartate 199, and glutamate 200 together coordinate Mg(2+). Residue lysine 197 is modified to N6-carboxylysine. The Proton acceptor role is filled by histidine 290. Arginine 291, histidine 323, and serine 375 together coordinate substrate.

Belongs to the RuBisCO large chain family. Type I subfamily. Heterohexadecamer of 8 large chains and 8 small chains; disulfide-linked. The disulfide link is formed within the large subunit homodimers. Requires Mg(2+) as cofactor. The disulfide bond which can form in the large chain dimeric partners within the hexadecamer appears to be associated with oxidative stress and protein turnover.

It localises to the carboxysome. The catalysed reaction is 2 (2R)-3-phosphoglycerate + 2 H(+) = D-ribulose 1,5-bisphosphate + CO2 + H2O. It carries out the reaction D-ribulose 1,5-bisphosphate + O2 = 2-phosphoglycolate + (2R)-3-phosphoglycerate + 2 H(+). In terms of biological role, ruBisCO catalyzes two reactions: the carboxylation of D-ribulose 1,5-bisphosphate, the primary event in carbon dioxide fixation, as well as the oxidative fragmentation of the pentose substrate in the photorespiration process. Both reactions occur simultaneously and in competition at the same active site. The polypeptide is Ribulose bisphosphate carboxylase large chain (Crocosphaera subtropica (strain ATCC 51142 / BH68) (Cyanothece sp. (strain ATCC 51142))).